Reading from the N-terminus, the 108-residue chain is Parvalbumin beta (108 aa).

EF-hand domains lie at 38–73 and 77–108; these read KSTD…FSST and LTAA…LVKA. The Ca(2+) site is built by Asp51, Asp53, Ser55, Phe57, Glu59, Glu62, Asp90, Asp92, Asp94, Lys96, and Glu101.

It belongs to the parvalbumin family.

Its function is as follows. In muscle, parvalbumin is thought to be involved in relaxation after contraction. It binds two calcium ions. The sequence is that of Parvalbumin beta from Graptemys geographica (Common map turtle).